The sequence spans 304 residues: Peroxisome biogenesis factor 2 (304 aa).

The Peroxisomal matrix portion of the chain corresponds to 1 to 14 (MAGREKTKSANRVL). The chain crosses the membrane as a helical span at residues 15–41 (RISQLDALELNKALEQLVWSQFTQCFH). At 42–47 (GFKPGL) the chain is on the cytoplasmic side. The helical transmembrane segment at 48 to 73 (LARFEPEVKACLWLFLWRFTIYSKNA) threads the bilayer. At 74–97 (TVGQSVLNIQYKNDFSSNSRYQPP) the chain is on the peroxisomal matrix side. Residues 98 to 124 (SKNQKLWYAVCTIGGRWLEERCYDLFR) traverse the membrane as a helical segment. The Cytoplasmic portion of the chain corresponds to 125–132 (NRHLASFG). A helical transmembrane segment spans residues 133–159 (KVKQCMNVMVGLLKLGELINFLIFLQK). The Peroxisomal matrix segment spans residues 160-186 (GKFATLTERLLGIHSVFCKPQNIREVG). A helical membrane pass occupies residues 187–210 (FDYMNRELLWHGFAEFLIFLLPLI). Over 211–304 (NIQKFKAKLS…GIEMSEVNAL (94 aa)) the chain is Cytoplasmic. 8 residues coordinate Zn(2+): Cys-243, Cys-246, Cys-258, His-260, Cys-263, Cys-266, Cys-279, and Cys-282. The RING-type zinc-finger motif lies at 243 to 283 (CALCGEWPTMPHTIGCEHVFCYYCVKSSFLFDMYFTCPKCG).

This sequence belongs to the pex2/pex10/pex12 family. As to quaternary structure, component of the PEX2-PEX10-PEX12 retrotranslocation channel, composed of PEX2, PEX10 and PEX12. Post-translationally, forms intramolecular and intermolecular disulfide bonds in response to reactive oxygen species (ROS), promoting higher stability.

The protein localises to the peroxisome membrane. It carries out the reaction [E2 ubiquitin-conjugating enzyme]-S-ubiquitinyl-L-cysteine + [acceptor protein]-L-cysteine = [E2 ubiquitin-conjugating enzyme]-L-cysteine + [acceptor protein]-S-ubiquitinyl-L-cysteine.. It catalyses the reaction S-ubiquitinyl-[E2 ubiquitin-conjugating enzyme]-L-cysteine + [acceptor protein]-L-lysine = [E2 ubiquitin-conjugating enzyme]-L-cysteine + N(6)-ubiquitinyl-[acceptor protein]-L-lysine.. It participates in protein modification; protein ubiquitination. Functionally, E3 ubiquitin-protein ligase component of a retrotranslocation channel required for peroxisome organization by mediating export of the PEX5 receptor from peroxisomes to the cytosol, thereby promoting PEX5 recycling. The retrotranslocation channel is composed of PEX2, PEX10 and PEX12; each subunit contributing transmembrane segments that coassemble into an open channel that specifically allows the passage of PEX5 through the peroxisomal membrane. PEX2 also regulates peroxisome organization by acting as a E3 ubiquitin-protein ligase. PEX2 ubiquitinates PEX5 during its passage through the retrotranslocation channel: catalyzes monoubiquitination of PEX5 at 'Cys-11', a modification that acts as a signal for PEX5 extraction into the cytosol. Required for pexophagy in response to starvation by mediating ubiquitination of peroxisomal proteins, such as PEX5 and ABCD3/PMP70. Also involved in the response to reactive oxygen species (ROS) by mediating 'Lys-48'-linked polyubiquitination and subsequent degradation of PNPLA2/ATGL, thereby regulating lipolysis. This Cricetulus griseus (Chinese hamster) protein is Peroxisome biogenesis factor 2 (PEX2).